Reading from the N-terminus, the 455-residue chain is Pup--protein ligase (455 aa).

Glutamate 12 lines the Mg(2+) pocket. Arginine 56 contributes to the ATP binding site. Residue tyrosine 58 coordinates Mg(2+). Residue aspartate 60 is the Proton acceptor of the active site. A Mg(2+)-binding site is contributed by glutamate 66. Positions 69 and 422 each coordinate ATP.

The protein belongs to the Pup ligase/Pup deamidase family. Pup-conjugating enzyme subfamily.

It carries out the reaction ATP + [prokaryotic ubiquitin-like protein]-L-glutamate + [protein]-L-lysine = ADP + phosphate + N(6)-([prokaryotic ubiquitin-like protein]-gamma-L-glutamyl)-[protein]-L-lysine.. It participates in protein degradation; proteasomal Pup-dependent pathway. Its pathway is protein modification; protein pupylation. Functionally, catalyzes the covalent attachment of the prokaryotic ubiquitin-like protein modifier Pup to the proteasomal substrate proteins, thereby targeting them for proteasomal degradation. This tagging system is termed pupylation. The ligation reaction involves the side-chain carboxylate of the C-terminal glutamate of Pup and the side-chain amino group of a substrate lysine. This is Pup--protein ligase from Acidimicrobium ferrooxidans (strain DSM 10331 / JCM 15462 / NBRC 103882 / ICP).